A 246-amino-acid chain; its full sequence is MTQRIAYVTGGMGGIGTAICQRLAKDGFRVVAGCGPNSPRREKWLEQQKALGFDFIASEGNVADWDSTKTAFDKVKSEVGEVDVLINNAGITRDVVFRKMTRADWDAVIDTNLTSLFNVTKQVIDGMADRGWGRIVNISSVNGQKGQFGQTNYSTAKAGLHGFTMALAQEVATKGVTVNTVSPGYIATDMVKAIRQDVLDKIVATIPVKRLGLPEEIASICAWLSSEESGFSTGADFSLNGGLHMG.

Residues 13–15 (GGI), G35, R40, 60–62 (GNV), and 88–92 (NAGIT) contribute to the NADP(+) site. Residues D94 and 147 to 150 (QFGQ) contribute to the substrate site. Y153 (proton acceptor) is an active-site residue. 183-186 (PGYI) contacts NADP(+). Residues 184–185 (GY) and R195 contribute to the substrate site.

This sequence belongs to the short-chain dehydrogenases/reductases (SDR) family. As to quaternary structure, homotetramer.

It is found in the cytoplasm. The catalysed reaction is a (3R)-3-hydroxyacyl-CoA + NADP(+) = a 3-oxoacyl-CoA + NADPH + H(+). It catalyses the reaction (3R)-3-hydroxybutanoyl-CoA + NADP(+) = acetoacetyl-CoA + NADPH + H(+). It participates in biopolymer metabolism; poly-(R)-3-hydroxybutanoate biosynthesis. Functionally, catalyzes the chiral reduction of acetoacetyl-CoA to (R)-3-hydroxybutyryl-CoA. Is involved in the biosynthesis of polyhydroxybutyrate (PHB), which is accumulated as an intracellular energy reserve material when cells grow under conditions of nutrient limitation. This is Acetoacetyl-CoA reductase from Cupriavidus necator (strain ATCC 17699 / DSM 428 / KCTC 22496 / NCIMB 10442 / H16 / Stanier 337) (Ralstonia eutropha).